Here is a 217-residue protein sequence, read N- to C-terminus: Orotidine 5'-phosphate decarboxylase (217 aa).

Residues Asp-14, Lys-36, 64–73 (DFKVADIPST), Ser-120, 172–182 (PGVGAQGGNLS), Gly-197, and Arg-198 contribute to the substrate site. Lys-66 serves as the catalytic Proton donor.

Belongs to the OMP decarboxylase family. Type 1 subfamily. As to quaternary structure, homodimer.

The enzyme catalyses orotidine 5'-phosphate + H(+) = UMP + CO2. The protein operates within pyrimidine metabolism; UMP biosynthesis via de novo pathway; UMP from orotate: step 2/2. Its function is as follows. Catalyzes the decarboxylation of orotidine 5'-monophosphate (OMP) to uridine 5'-monophosphate (UMP). The polypeptide is Orotidine 5'-phosphate decarboxylase (Methanococcus maripaludis (strain DSM 14266 / JCM 13030 / NBRC 101832 / S2 / LL)).